Consider the following 255-residue polypeptide: MSIRVIIAGFKGKMGQAACQMVLTDPDLDLVAVLDPFESESEWQGIPVFKDKADLAGFEADVWVDFTTPAVAYENTRFALENGFAPVVGTTGFTSEEIAELKEFSRAQDLGGLIAPNFALGAVLLMQFATQAAKYFPNVEIIELHHDKKKDAPSGTAIKTAELMAEVRESIQQGAADEEELIAGARGADFDGMRIHSVRLPGLVAHQEVIFGNQGEGLTLRHDSYDRISFMTGVNLGIKEVVKRHELVYGLEHLL.

Residues 9–14 (GFKGKM), Asp-35, 89–91 (GTT), and 115–118 (APNF) contribute to the NAD(+) site. The Proton donor/acceptor role is filled by His-145. Position 146 (His-146) interacts with (S)-2,3,4,5-tetrahydrodipicolinate. Lys-149 serves as the catalytic Proton donor. 155–156 (GT) serves as a coordination point for (S)-2,3,4,5-tetrahydrodipicolinate.

Belongs to the DapB family.

The protein resides in the cytoplasm. The catalysed reaction is (S)-2,3,4,5-tetrahydrodipicolinate + NAD(+) + H2O = (2S,4S)-4-hydroxy-2,3,4,5-tetrahydrodipicolinate + NADH + H(+). It catalyses the reaction (S)-2,3,4,5-tetrahydrodipicolinate + NADP(+) + H2O = (2S,4S)-4-hydroxy-2,3,4,5-tetrahydrodipicolinate + NADPH + H(+). Its pathway is amino-acid biosynthesis; L-lysine biosynthesis via DAP pathway; (S)-tetrahydrodipicolinate from L-aspartate: step 4/4. Functionally, catalyzes the conversion of 4-hydroxy-tetrahydrodipicolinate (HTPA) to tetrahydrodipicolinate. The sequence is that of 4-hydroxy-tetrahydrodipicolinate reductase from Streptococcus pneumoniae serotype 4 (strain ATCC BAA-334 / TIGR4).